The primary structure comprises 162 residues: NADH-quinone oxidoreductase subunit C (162 aa).

This sequence belongs to the complex I 30 kDa subunit family. As to quaternary structure, NDH-1 is composed of 14 different subunits. Subunits NuoB, C, D, E, F, and G constitute the peripheral sector of the complex.

It localises to the cell inner membrane. The catalysed reaction is a quinone + NADH + 5 H(+)(in) = a quinol + NAD(+) + 4 H(+)(out). NDH-1 shuttles electrons from NADH, via FMN and iron-sulfur (Fe-S) centers, to quinones in the respiratory chain. The immediate electron acceptor for the enzyme in this species is believed to be ubiquinone. Couples the redox reaction to proton translocation (for every two electrons transferred, four hydrogen ions are translocated across the cytoplasmic membrane), and thus conserves the redox energy in a proton gradient. This chain is NADH-quinone oxidoreductase subunit C, found in Geobacter sulfurreducens (strain ATCC 51573 / DSM 12127 / PCA).